The sequence spans 89 residues: Large ribosomal subunit protein bL27 (89 aa).

Belongs to the bacterial ribosomal protein bL27 family.

This chain is Large ribosomal subunit protein bL27, found in Synechococcus sp. (strain JA-3-3Ab) (Cyanobacteria bacterium Yellowstone A-Prime).